We begin with the raw amino-acid sequence, 657 residues long: Probable potassium transport system protein Kup 1 (657 aa).

Helical transmembrane passes span 40-60, 88-108, 135-155, 172-192, 198-218, 241-261, 282-302, 320-340, 380-400, 402-422, 432-452, and 454-474; these read VTSGFWALTLGSIGVVFGDIG, VLSLILWALLIVVTAKYVLLL, WFLLALGVVGASMFIGDSMIT, PALEHYVVPLTVLILVLLFAV, ALVASAFGPVMVVWFTCIAVM, FLLSHGTIGLVTLGAVFLAVT, WMFFVLPSLLINYFGQGALVL, LVLPLVGLATAATVIASQAVI, LLLIGVMLLVLLFHTPSNLAS, YGIAVSTTMVADGIMGFVVIW, AAAVILPFVVVDMSFFSANLL, and LLEGAWVPLLFGAAMAGTIWT.

The protein belongs to the HAK/KUP transporter (TC 2.A.72) family.

Its subcellular location is the cell inner membrane. The catalysed reaction is K(+)(in) + H(+)(in) = K(+)(out) + H(+)(out). In terms of biological role, transport of potassium into the cell. Likely operates as a K(+):H(+) symporter. This is Probable potassium transport system protein Kup 1 from Bradyrhizobium diazoefficiens (strain JCM 10833 / BCRC 13528 / IAM 13628 / NBRC 14792 / USDA 110).